The chain runs to 315 residues: Eukaryotic translation initiation factor 2 subunit 1 (315 aa).

The 72-residue stretch at 17–88 folds into the S1 motif domain; it reads EDVVMVNVRS…EKGYIDLSKR (72 aa). At S49 the chain carries Phosphoserine; by HRI. S52 is modified (phosphoserine). At K141 the chain carries N6-acetyllysine. Residue S158 is modified to Phosphoserine. A phosphothreonine mark is found at T279 and T281. Residues 293 to 315 are disordered; the sequence is LERENAEVDGDDDAEEMEAKAED. Over residues 299 to 308 the composition is skewed to acidic residues; the sequence is EVDGDDDAEE.

It belongs to the eIF-2-alpha family. Eukaryotic translation initiation factor 2 eIF2 is a heterotrimeric complex composed of an alpha (EIF2S1), a beta (EIF2S2) and a gamma (EIF2S3) chain. eIF2 is member of the 43S pre-initiation complex (43S PIC). eIF2 forms a complex with at least CELF1/CUGBP1, CALR, CALR3, EIF2S1, EIF2S2, HSP90B1 and HSPA5. Interaction with METAP2 protects EIF2S1 from inhibitory phosphorylation. Interacts with ABCF1. Associates with ribosomes. Interacts with DDX3X in an RNA-independent manner. Post-translationally, phosphorylation at Ser-49 and Ser-52 stabilizes the eIF-2/GDP/eIF2B complex and prevents GDP/GTP exchange reaction, thus impairing the recycling of eIF-2 between successive rounds of initiation and leading to global inhibition of translation, while concomitantly initiating the preferential translation of integrated stress response (ISR)-specific mRNAs. Substrate for at least 4 kinases: EIF2AK1/HRI, EIF2AK2/PKR, EIF2AK3/PERK and EIF2AK4/GCN2. Phosphorylation on Ser-52 by the EIF2AK4/GCN2 protein kinase occurs in response to amino acid starvation and UV irradiation. Phosphorylation at Ser-52 by the EIF2AK3/PERK protein kinase occurs in response to the unfolded protein response. Phosphorylation at Ser-52 by EIF2AK1/HRI in response to mitochondrial damage promotes relocalization to the mitochondrial surface.

The protein resides in the cytoplasm. It is found in the stress granule. It localises to the cytosol. The protein localises to the mitochondrion. With respect to regulation, activity is regulated by phosphorylation at Ser-49 and Ser-52, which stabilizes the eIF2/GDP/eIF2B complex and prevents the eIF2B-mediated exchange of GDP for GTP, thereby preventing the formation of the 43S pre-initiation complex (43S PIC). This results in the global attenuation of 5' cap-dependent protein synthesis and concomitant translation of ISR-specific mRNAs that contain a short upstream open reading frame (uORF) in their 5' UTR, such as ATF4, ATF5, DDIT3/CHOP and PPP1R15A/GADD34. Functionally, member of the eIF2 complex that functions in the early steps of protein synthesis by forming a ternary complex with GTP and initiator tRNA. This complex binds to a 40S ribosomal subunit, followed by mRNA binding to form a 43S pre-initiation complex. Junction of the 60S ribosomal subunit to form the 80S initiation complex is preceded by hydrolysis of the GTP bound to eIF2 and release of an eIF2-GDP binary complex. In order for eIF2 to recycle and catalyze another round of initiation, the GDP bound to eIF2 must exchange with GTP by way of a reaction catalyzed by eIF2B. EIF2S1/eIF2-alpha is a key component of the integrated stress response (ISR), required for adaptation to various stress: phosphorylation by metabolic-stress sensing protein kinases (EIF2AK1/HRI, EIF2AK2/PKR, EIF2AK3/PERK and EIF2AK4/GCN2) in response to stress converts EIF2S1/eIF2-alpha in a global protein synthesis inhibitor, leading to a attenuation of cap-dependent translation, while concomitantly initiating the preferential translation of ISR-specific mRNAs, such as the transcriptional activators ATF4 and QRICH1, and hence allowing ATF4- and QRICH1-mediated reprogramming. EIF2S1/eIF2-alpha also acts as an activator of mitophagy in response to mitochondrial damage: phosphorylation by EIF2AK1/HRI promotes relocalization to the mitochondrial surface, thereby triggering PRKN-independent mitophagy. The sequence is that of Eukaryotic translation initiation factor 2 subunit 1 (EIF2S1) from Pongo abelii (Sumatran orangutan).